A 508-amino-acid chain; its full sequence is Histidine ammonia-lyase (508 aa).

Positions 143–145 (ASG) form a cross-link, 5-imidazolinone (Ala-Gly). Ser144 is subject to 2,3-didehydroalanine (Ser).

It belongs to the PAL/histidase family. Post-translationally, contains an active site 4-methylidene-imidazol-5-one (MIO), which is formed autocatalytically by cyclization and dehydration of residues Ala-Ser-Gly.

Its subcellular location is the cytoplasm. It carries out the reaction L-histidine = trans-urocanate + NH4(+). It participates in amino-acid degradation; L-histidine degradation into L-glutamate; N-formimidoyl-L-glutamate from L-histidine: step 1/3. This is Histidine ammonia-lyase from Klebsiella pneumoniae subsp. pneumoniae (strain ATCC 700721 / MGH 78578).